Consider the following 140-residue polypeptide: Large ribosomal subunit protein uL16 (140 aa).

This sequence belongs to the universal ribosomal protein uL16 family. In terms of assembly, part of the 50S ribosomal subunit.

Its function is as follows. Binds 23S rRNA and is also seen to make contacts with the A and possibly P site tRNAs. The chain is Large ribosomal subunit protein uL16 from Onion yellows phytoplasma (strain OY-M).